A 452-amino-acid polypeptide reads, in one-letter code: Probable multidrug resistance protein NorM (452 aa).

12 helical membrane-spanning segments follow: residues 14-34 (LLHI…ITFL), 56-76 (LWTP…PIVA), 97-117 (VAAL…DLIL), 129-149 (IAKH…VYTV), 164-184 (MMIT…FIFG), 195-215 (GAGL…FFII), 244-264 (IGLP…AVTL), 284-304 (ASLL…VVGF), 319-339 (LIGI…ILLF), 360-380 (FLIY…IQGA), 392-412 (AAAF…VGTF), and 417-437 (AFGY…GLFF).

It belongs to the multi antimicrobial extrusion (MATE) (TC 2.A.66.1) family.

Its subcellular location is the cell membrane. Multidrug efflux pump. In Bacillus subtilis (strain 168), this protein is Probable multidrug resistance protein NorM (norM).